Reading from the N-terminus, the 316-residue chain is C1GALT1-specific chaperone 1 (316 aa).

Residues 1-6 (MLSESS) lie on the Cytoplasmic side of the membrane. A helical; Signal-anchor for type II membrane protein transmembrane segment spans residues 7 to 26 (SFLKGVMLGSIFCALITMLG). Topologically, residues 27–316 (HIRIGNRMHH…FLPPNGSEND (290 aa)) are lumenal.

It belongs to the glycosyltransferase 31 family. Beta3-Gal-T subfamily. Associates with core 1 beta-3-galactosyltransferase (C1GALT1), probably not with the soluble active form.

It localises to the membrane. Its function is as follows. Probable chaperone required for the generation of 1 O-glycan Gal-beta1-3GalNAc-alpha1-Ser/Thr (T antigen), which is a precursor for many extended O-glycans in glycoproteins. Probably acts as a specific molecular chaperone assisting the folding/stability of core 1 beta-3-galactosyltransferase (C1GALT1). The chain is C1GALT1-specific chaperone 1 (C1galt1c1) from Mus musculus (Mouse).